We begin with the raw amino-acid sequence, 242 residues long: Adapter protein MecA (242 aa).

Belongs to the MecA family. In terms of assembly, homodimer.

Functionally, enables the recognition and targeting of unfolded and aggregated proteins to the ClpC protease or to other proteins involved in proteolysis. The polypeptide is Adapter protein MecA (Streptococcus gordonii (strain Challis / ATCC 35105 / BCRC 15272 / CH1 / DL1 / V288)).